The sequence spans 242 residues: Protein ABHD14A (242 aa).

A helical; Signal-anchor for type II membrane protein transmembrane segment spans residues 6–26 (AALLGLGLLLMFLLYMGLPGP). N-linked (GlcNAc...) asparagine glycosylation is present at asparagine 38. Active-site charge relay system residues include serine 142, aspartate 193, and histidine 220.

The protein belongs to the AB hydrolase superfamily. ABHD14 family.

The protein localises to the cytoplasm. It localises to the membrane. Possible role in granule neuron development. The protein is Protein ABHD14A of Rattus norvegicus (Rat).